The chain runs to 332 residues: Biotin synthase (332 aa).

One can recognise a Radical SAM core domain in the interval 53 to 282 (HFGKKVKLNM…TKEIRISGGR (230 aa)). [4Fe-4S] cluster-binding residues include Cys-71, Cys-75, and Cys-78. Cys-115, Cys-147, Cys-207, and Arg-277 together coordinate [2Fe-2S] cluster.

Belongs to the radical SAM superfamily. Biotin synthase family. As to quaternary structure, homodimer. [4Fe-4S] cluster serves as cofactor. [2Fe-2S] cluster is required as a cofactor.

It catalyses the reaction (4R,5S)-dethiobiotin + (sulfur carrier)-SH + 2 reduced [2Fe-2S]-[ferredoxin] + 2 S-adenosyl-L-methionine = (sulfur carrier)-H + biotin + 2 5'-deoxyadenosine + 2 L-methionine + 2 oxidized [2Fe-2S]-[ferredoxin]. Its pathway is cofactor biosynthesis; biotin biosynthesis; biotin from 7,8-diaminononanoate: step 2/2. Functionally, catalyzes the conversion of dethiobiotin (DTB) to biotin by the insertion of a sulfur atom into dethiobiotin via a radical-based mechanism. This is Biotin synthase from Bacillus cereus (strain B4264).